The sequence spans 449 residues: C4-dicarboxylate transport protein (449 aa).

A run of 9 helical transmembrane segments spans residues 5–25 (AVFK…VSLG), 45–65 (LIKM…IAGM), 77–97 (LAVL…LIVV), 149–169 (GDML…HSFG), 185–205 (VLFG…FGAM), 231–251 (CVIF…FSII), 298–318 (GYSF…VFIA), 332–352 (TLLV…GSGF), and 353–373 (IVLA…LALI).

This sequence belongs to the dicarboxylate/amino acid:cation symporter (DAACS) (TC 2.A.23) family.

The protein resides in the cell inner membrane. Its function is as follows. Responsible for the transport of dicarboxylates such as succinate, fumarate, and malate from the periplasm across the membrane. The polypeptide is C4-dicarboxylate transport protein (Dechloromonas aromatica (strain RCB)).